Here is a 1207-residue protein sequence, read N- to C-terminus: AP-3 complex subunit delta-1 (1207 aa).

Residue alanine 2 is modified to N-acetylalanine. 9 HEAT repeats span residues 34–71 (KYIS…LGYD), 142–179 (DLAR…KYPE), 180–216 (SLRP…RNPK), 218–254 (YLSL…LEPR), 257–296 (KKLI…GMPN), 298–336 (SASI…THPK), 337–373 (SVQA…KKNL), 375–409 (EIVK…QSNY), and 521–558 (VYVQ…ERLP). 2 disordered regions span residues 630 to 695 (PLSD…RYQD) and 731 to 970 (RRHR…EEPL). Phosphoserine is present on residues serine 632, serine 634, and serine 636. The segment covering 648 to 675 (EEQRHTKPRAPEADEQELARRREARRQE) has biased composition (basic and acidic residues). Residues 659 to 679 (EADEQELARRREARRQEQANN) are a coiled coil. Serine 688 is subject to Phosphoserine. The stretch at 725–752 (VKLEEERRHRQRLEKDKRKKKKRERERR) forms a coiled coil. A compositionally biased stretch (basic and acidic residues) spans 731–740 (RRHRQRLEKD). Residues 741–759 (KRKKKKRERERRGTRRHSS) show a composition bias toward basic residues. Phosphoserine occurs at positions 758 and 759. Residue threonine 762 is modified to Phosphothreonine. A phosphoserine mark is found at serine 764, serine 788, and serine 829. The span at 777–794 (VTEEMPENALPSDEDDKD) shows a compositional bias: acidic residues. Residues 795-840 (PNDPYRALDIDLDKPLADSEKLPVQKHRNAETSKSPEKEDVPLVEK) show a composition bias toward basic and acidic residues. The span at 841–854 (KSKKPKKKEKKHKE) shows a compositional bias: basic residues. Positions 846–870 (KKKEKKHKEKEREKKKKEVEKGEDL) form a coiled coil. 2 stretches are compositionally biased toward basic and acidic residues: residues 855-869 (KERE…KGED) and 899-908 (EGQEEPRGEE). The span at 923–933 (PSKHKKKKHKK) shows a compositional bias: basic residues. Residues 952 to 969 (ADEEAAEPVENGTLEEEP) are compositionally biased toward acidic residues.

Belongs to the adaptor complexes large subunit family. AP-3 associates with the BLOC-1 complex. Adaptor protein complex 3 (AP-3) is a heterotetramer composed of two large adaptins (delta-type subunit AP3D1 and beta-type subunit AP3B1 or AP3B2), a medium adaptin (mu-type subunit AP3M1 or AP3M2) and a small adaptin (sigma-type subunit APS1 or AP3S2). Interacts with SLC30A2. Interacts with CLN3 (via dileucine motif); this interaction facilitates lysosomal targeting.

It localises to the cytoplasm. The protein resides in the golgi apparatus membrane. In terms of biological role, part of the AP-3 complex, an adaptor-related complex which is not clathrin-associated. The complex is associated with the Golgi region as well as more peripheral structures. It facilitates the budding of vesicles from the Golgi membrane and may be directly involved in trafficking to lysosomes. Involved in process of CD8+ T-cell and NK cell degranulation. In concert with the BLOC-1 complex, AP-3 is required to target cargos into vesicles assembled at cell bodies for delivery into neurites and nerve terminals. This Bos taurus (Bovine) protein is AP-3 complex subunit delta-1 (AP3D1).